Consider the following 359-residue polypeptide: Glyceraldehyde-3-phosphate dehydrogenase, glycosomal (359 aa).

NAD(+) is bound by residues 12–13, Asp-38, Gln-91, and Ser-134; that span reads RI. D-glyceraldehyde 3-phosphate-binding positions include 165–167, Thr-197, 226–227, and Arg-249; these read SCT and TG. Cys-166 serves as the catalytic Nucleophile. Asn-335 lines the NAD(+) pocket. The Microbody targeting signal motif lies at 357-359; sequence ARL.

The protein belongs to the glyceraldehyde-3-phosphate dehydrogenase family. Homotetramer.

It is found in the glycosome. The enzyme catalyses D-glyceraldehyde 3-phosphate + phosphate + NAD(+) = (2R)-3-phospho-glyceroyl phosphate + NADH + H(+). Its pathway is carbohydrate degradation; glycolysis; pyruvate from D-glyceraldehyde 3-phosphate: step 1/5. The protein is Glyceraldehyde-3-phosphate dehydrogenase, glycosomal of Trypanosoma cruzi.